The following is a 1404-amino-acid chain: DNA-directed RNA polymerase subunit beta' (1404 aa).

Positions 60, 62, 75, and 78 each coordinate Zn(2+). Mg(2+)-binding residues include aspartate 449, aspartate 451, and aspartate 453. The Zn(2+) site is built by cysteine 778, cysteine 852, cysteine 859, and cysteine 862. The interval 1381 to 1404 (DRPLEEEEEEEIPQSIADDSDGDE) is disordered. The span at 1384–1404 (LEEEEEEEIPQSIADDSDGDE) shows a compositional bias: acidic residues.

It belongs to the RNA polymerase beta' chain family. The RNAP catalytic core consists of 2 alpha, 1 beta, 1 beta' and 1 omega subunit. When a sigma factor is associated with the core the holoenzyme is formed, which can initiate transcription. Mg(2+) serves as cofactor. Zn(2+) is required as a cofactor.

The catalysed reaction is RNA(n) + a ribonucleoside 5'-triphosphate = RNA(n+1) + diphosphate. DNA-dependent RNA polymerase catalyzes the transcription of DNA into RNA using the four ribonucleoside triphosphates as substrates. The polypeptide is DNA-directed RNA polymerase subunit beta' (Leptospira borgpetersenii serovar Hardjo-bovis (strain L550)).